The primary structure comprises 748 residues: Histone-lysine N-methyltransferase EZH2 (748 aa).

Residues 183 to 199 (DYEDDEDGEDNQDDERD) are compositionally biased toward acidic residues. 2 disordered regions span residues 183–215 (DYED…KETL) and 347–428 (TPPK…NIEP). Basic and acidic residues predominate over residues 200–215 (DITKDQDDNMEEKETL). Over residues 348 to 359 (PPKRPSGRRRGR) the composition is skewed to basic residues. Over residues 376–387 (EAKDTDSDREAG) the composition is skewed to basic and acidic residues. The CXC domain occupies 505 to 607 (CRKIQLKKDG…SKNVSCKNCS (103 aa)). In terms of domain architecture, SET spans 614 to 729 (KHLLLAPSDV…TGEELFFDYR (116 aa)).

It belongs to the class V-like SAM-binding methyltransferase superfamily. Histone-lysine methyltransferase family. EZ subfamily. In terms of assembly, component of the prc2/eed-ezh2 complex.

Its subcellular location is the nucleus. The enzyme catalyses L-lysyl(27)-[histone H3] + 3 S-adenosyl-L-methionine = N(6),N(6),N(6)-trimethyl-L-lysyl(27)-[histone H3] + 3 S-adenosyl-L-homocysteine + 3 H(+). Its function is as follows. Polycomb group (PcG) protein. Catalytic subunit of the prc2/eed-ezh2 complex, which methylates 'Lys-9' and 'Lys-27' of histone H3, leading to transcriptional repression of the affected target gene. May regulate the circadian clock via histone methylation at the promoter of the circadian genes. The chain is Histone-lysine N-methyltransferase EZH2 (ezh2-b) from Xenopus laevis (African clawed frog).